The chain runs to 340 residues: rRNA adenine N-6-methyltransferase (340 aa).

Low complexity predominate over residues 1–25 (MAGPQDRPRGRGPSSGRPQRPVGGR). A disordered region spans residues 1-37 (MAGPQDRPRGRGPSSGRPQRPVGGRSQRDRDRRVLGQ). S-adenosyl-L-methionine-binding residues include N38, L40, G65, E86, D111, and A127. A disordered region spans residues 284-340 (RGGAARGPGDQRGRRGRPGGGPRPDGRAGGGPRRDAGGRRTGDGRGGRPRPPRGGQA). Gly residues predominate over residues 301-314 (PGGGPRPDGRAGGG). The segment covering 315–329 (PRRDAGGRRTGDGRG) has biased composition (basic and acidic residues).

Belongs to the class I-like SAM-binding methyltransferase superfamily. rRNA adenine N(6)-methyltransferase family.

In terms of biological role, involved in erythromycin resistance. This chain is rRNA adenine N-6-methyltransferase (ermA), found in Aeromicrobium erythreum (strain ATCC 51598 / DSM 8599 / JCM 8359 / NBRC 15406 / NRRL B-3381).